The chain runs to 161 residues: Trivalent organoarsenical cleaving enzyme (161 aa).

A VOC domain is found at 2–119 (KYAHVGLNVT…DGNEWEFFYT (118 aa)). Fe(2+)-binding residues include H5 and H62. Roxarsone (III) is bound by residues C96 and C97. E115 is a binding site for Fe(2+).

Fe(2+) is required as a cofactor.

The enzyme catalyses methylarsonous acid + AH2 + O2 = arsenite + methanol + A + H(+). It carries out the reaction roxarsone (III) + AH2 + O2 = 4-hydroxy-3-nitrocyclohexa-2,5-dien-1-one + arsenite + A + H(+). It catalyses the reaction nitarsone (III) + AH2 + O2 = 4-nitrocyclohexa-2,5-dien-1-one + arsenite + A + H(+). The catalysed reaction is 4-aminophenylarsonous acid + AH2 + O2 = 4-aminocyclohexa-2,5-dien-1-one + arsenite + A. With respect to regulation, inhibited in vitro by reagents that chemically modify histidine residues (diethylpyrocarbonate (DEPC)), aspartate or glutamate residues (1-ethyl-3-(3-(dimethylamino)propyl) carbodiimide (EDC)), or cysteine residues (N-ethylmaleimide (NEM) or iodoacetamide (IAA)). Functionally, nonheme iron-dependent dioxygenase that can break carbon-arsenic bonds, playing a role in the detoxification of environmental organoarsenical compounds. Catalyzes the oxygen-dependent demethylation of highly toxic methylarsonous acid (MAs(III)) to arsenite, which can then be exported out of the cell. Can also cleave the C-As bond in several trivalent aromatic arsenicals, including roxarsone (III), nitarsone (III) and (4-aminophenyl)arsonous acid. Organoarsenical degradation by this enzyme is proposed to have a significant impact on the arsenic biogeocycle that maintains a balance between organic and inorganic species. The protein is Trivalent organoarsenical cleaving enzyme of Bacillus sp. (strain MD1).